We begin with the raw amino-acid sequence, 652 residues long: DNA ligase (652 aa).

Residues 29-33 (DAEYD), 78-79 (SL), and E107 each bind NAD(+). Catalysis depends on K109, which acts as the N6-AMP-lysine intermediate. NAD(+) contacts are provided by R130, E164, K278, and K302. Zn(2+)-binding residues include C395, C398, C413, and C418. Residues 577–652 (DENAALSGMT…IKDEAWLESL (76 aa)) form the BRCT domain.

This sequence belongs to the NAD-dependent DNA ligase family. LigA subfamily. It depends on Mg(2+) as a cofactor. The cofactor is Mn(2+).

It catalyses the reaction NAD(+) + (deoxyribonucleotide)n-3'-hydroxyl + 5'-phospho-(deoxyribonucleotide)m = (deoxyribonucleotide)n+m + AMP + beta-nicotinamide D-nucleotide.. In terms of biological role, DNA ligase that catalyzes the formation of phosphodiester linkages between 5'-phosphoryl and 3'-hydroxyl groups in double-stranded DNA using NAD as a coenzyme and as the energy source for the reaction. It is essential for DNA replication and repair of damaged DNA. The chain is DNA ligase from Streptococcus suis (strain 98HAH33).